Here is a 158-residue protein sequence, read N- to C-terminus: SsrA-binding protein (158 aa).

This sequence belongs to the SmpB family.

It is found in the cytoplasm. Required for rescue of stalled ribosomes mediated by trans-translation. Binds to transfer-messenger RNA (tmRNA), required for stable association of tmRNA with ribosomes. tmRNA and SmpB together mimic tRNA shape, replacing the anticodon stem-loop with SmpB. tmRNA is encoded by the ssrA gene; the 2 termini fold to resemble tRNA(Ala) and it encodes a 'tag peptide', a short internal open reading frame. During trans-translation Ala-aminoacylated tmRNA acts like a tRNA, entering the A-site of stalled ribosomes, displacing the stalled mRNA. The ribosome then switches to translate the ORF on the tmRNA; the nascent peptide is terminated with the 'tag peptide' encoded by the tmRNA and targeted for degradation. The ribosome is freed to recommence translation, which seems to be the essential function of trans-translation. The sequence is that of SsrA-binding protein from Hydrogenovibrio crunogenus (strain DSM 25203 / XCL-2) (Thiomicrospira crunogena).